A 375-amino-acid chain; its full sequence is Protein abhd-3.2 (375 aa).

One can recognise an AB hydrolase-1 domain in the interval 108–203 (PIVVFLPGIT…ILWNYLAMTG (96 aa)). Active-site charge relay system residues include Ser189, Asp315, and His344.

The protein belongs to the AB hydrolase superfamily. AB hydrolase 4 family.

The sequence is that of Protein abhd-3.2 from Caenorhabditis elegans.